A 567-amino-acid chain; its full sequence is Beta-galactoside-specific lectin 2 (567 aa).

Positions M1–N33 are cleaved as a signal peptide. An N-linked (GlcNAc...) asparagine glycan is attached at N145. E198 is a catalytic residue. 2 disulfide bridges follow: C280–C306 and C322–C341. The propeptide at D288–V301 is connecting peptide. The Ricin B-type lectin 1 domain occupies S309–S439. Position 324 to 326 (D324 to R326) interacts with D-galactose. N-linked (GlcNAc...) asparagine glycosylation occurs at N362. Cysteines 365 and 382 form a disulfide. N-linked (GlcNAc...) asparagine glycosylation occurs at N440. One can recognise a Ricin B-type lectin 2 domain in the interval A443–V566. 2 disulfides stabilise this stretch: C456/C469 and C495/C512. D539–R541 contributes to the D-galactose binding site.

It belongs to the ribosome-inactivating protein family. Type 2 RIP subfamily. As to quaternary structure, disulfide-linked dimer of A and B chains.

It carries out the reaction Endohydrolysis of the N-glycosidic bond at one specific adenosine on the 28S rRNA.. Its function is as follows. The A chain is responsible for inhibiting protein synthesis through the catalytic inactivation of 60S ribosomal subunits by removing adenine from position 4,324 of 28S rRNA. The B chain binds to cell receptors and probably facilitates the entry into the cell of the A chain; B chains are also responsible for cell agglutination (lectin activity). This Viscum album (European mistletoe) protein is Beta-galactoside-specific lectin 2.